Reading from the N-terminus, the 912-residue chain is Coatomer subunit beta (912 aa).

10 HEAT repeats span residues proline 59–glycine 96, serine 100–glutamate 135, valine 136–tyrosine 172, serine 244–alanine 281, asparagine 300–aspartate 337, cysteine 339–aspartate 375, glutamate 397–serine 434, lysine 441–serine 479, leucine 550–serine 575, and alanine 576–tyrosine 612.

In terms of assembly, oligomeric complex that consists of at least the alpha, beta, beta', gamma, delta, epsilon and zeta subunits.

The protein localises to the cytoplasm. The protein resides in the golgi apparatus membrane. It is found in the cytoplasmic vesicle. Its subcellular location is the COPI-coated vesicle membrane. In terms of biological role, the coatomer is a cytosolic protein complex that binds to dilysine motifs and reversibly associates with Golgi non-clathrin-coated vesicles, which further mediate biosynthetic protein transport from the ER, via the Golgi up to the trans Golgi network. Coatomer complex is required for budding from Golgi membranes, and is essential for the retrograde Golgi-to-ER transport of dilysine-tagged proteins. This chain is Coatomer subunit beta (copb), found in Dictyostelium discoideum (Social amoeba).